Consider the following 182-residue polypeptide: Dual-action ribosomal maturation protein DarP (182 aa).

Residues 1–25 (MEENLADNSEREARPSKTKRKKEMH) are disordered.

Belongs to the DarP family.

Its subcellular location is the cytoplasm. Its function is as follows. Member of a network of 50S ribosomal subunit biogenesis factors which assembles along the 30S-50S interface, preventing incorrect 23S rRNA structures from forming. Promotes peptidyl transferase center (PTC) maturation. The protein is Dual-action ribosomal maturation protein DarP of Nitrosospira multiformis (strain ATCC 25196 / NCIMB 11849 / C 71).